Consider the following 248-residue polypeptide: Homeobox-leucine zipper protein HOX15 (248 aa).

Residues 1 to 44 (MAQDDEDVGLALGLSLGSGGHRRQRESRDEAPSSAAASLLTLRL) form a disordered region. Over residues 32 to 44 (PSSAAASLLTLRL) the composition is skewed to low complexity. A DNA-binding region (homeobox) is located at residues 91-150 (NSRKKLRLSKEQSALLEDRFKEHSTLNPKQKVALAKQLNLRPRQVEVWFQNRRARTKLKQ). Residues 149 to 193 (KQTEVDCELLKRCCETLTEENRRLHRELQQLRALTHSTAAGFFMA) form a leucine-zipper region. Residues 223–248 (PTAAADRTNKPTAPHLFSPFAKSAAC) form a disordered region.

This sequence belongs to the HD-ZIP homeobox family. Class II subfamily. In terms of tissue distribution, expressed in seedlings, stems, leaf blades and panicles.

It is found in the nucleus. Its function is as follows. Probable transcription factor. The polypeptide is Homeobox-leucine zipper protein HOX15 (HOX15) (Oryza sativa subsp. indica (Rice)).